The primary structure comprises 171 residues: Regulator of ribonuclease activity A (171 aa).

Belongs to the RraA family. As to quaternary structure, homotrimer. Binds to both RNA-binding sites in the C-terminal region of Rne and to RhlB.

It localises to the cytoplasm. Globally modulates RNA abundance by binding to RNase E (Rne) and regulating its endonucleolytic activity. Can modulate Rne action in a substrate-dependent manner by altering the composition of the degradosome. Modulates RNA-binding and helicase activities of the degradosome. In Vibrio cholerae serotype O1 (strain ATCC 39315 / El Tor Inaba N16961), this protein is Regulator of ribonuclease activity A.